Here is a 430-residue protein sequence, read N- to C-terminus: Tol-Pal system protein TolB (430 aa).

An N-terminal signal peptide occupies residues 1–21 (MKQALRVAFGFLILWASVLHA).

Belongs to the TolB family. In terms of assembly, the Tol-Pal system is composed of five core proteins: the inner membrane proteins TolA, TolQ and TolR, the periplasmic protein TolB and the outer membrane protein Pal. They form a network linking the inner and outer membranes and the peptidoglycan layer.

The protein localises to the periplasm. In terms of biological role, part of the Tol-Pal system, which plays a role in outer membrane invagination during cell division and is important for maintaining outer membrane integrity. TolB occupies a key intermediary position in the Tol-Pal system because it communicates directly with both membrane-embedded components, Pal in the outer membrane and TolA in the inner membrane. This Shigella dysenteriae serotype 1 (strain Sd197) protein is Tol-Pal system protein TolB.